Consider the following 122-residue polypeptide: Large ribosomal subunit protein uL18 (122 aa).

It belongs to the universal ribosomal protein uL18 family. Part of the 50S ribosomal subunit; part of the 5S rRNA/L5/L18/L25 subcomplex. Contacts the 5S and 23S rRNAs.

Its function is as follows. This is one of the proteins that bind and probably mediate the attachment of the 5S RNA into the large ribosomal subunit, where it forms part of the central protuberance. In Thermotoga petrophila (strain ATCC BAA-488 / DSM 13995 / JCM 10881 / RKU-1), this protein is Large ribosomal subunit protein uL18.